Reading from the N-terminus, the 699-residue chain is Transketolase (699 aa).

A substrate-binding site is contributed by H45. Residues T48, H85, and 133-135 (GPL) contribute to the thiamine diphosphate site. D177 contacts Mg(2+). Thiamine diphosphate-binding residues include G178 and N207. The Mg(2+) site is built by N207 and I209. The substrate site is built by H283, R378, and S405. Residue H283 coordinates thiamine diphosphate. The active-site Proton donor is the E441. F467 is a binding site for thiamine diphosphate. Positions 491, 499, and 552 each coordinate substrate.

It belongs to the transketolase family. In terms of assembly, homodimer. Requires Mg(2+) as cofactor. The cofactor is Ca(2+). Mn(2+) serves as cofactor. Co(2+) is required as a cofactor. It depends on thiamine diphosphate as a cofactor.

The catalysed reaction is D-sedoheptulose 7-phosphate + D-glyceraldehyde 3-phosphate = aldehydo-D-ribose 5-phosphate + D-xylulose 5-phosphate. Functionally, catalyzes the transfer of a two-carbon ketol group from a ketose donor to an aldose acceptor, via a covalent intermediate with the cofactor thiamine pyrophosphate. The sequence is that of Transketolase (tkt) from Mycobacterium leprae (strain TN).